Consider the following 188-residue polypeptide: Nicotinamide-nucleotide adenylyltransferase (188 aa).

Belongs to the archaeal NMN adenylyltransferase family.

It is found in the cytoplasm. The enzyme catalyses beta-nicotinamide D-ribonucleotide + ATP + H(+) = diphosphate + NAD(+). The protein operates within cofactor biosynthesis; NAD(+) biosynthesis; NAD(+) from nicotinamide D-ribonucleotide: step 1/1. The chain is Nicotinamide-nucleotide adenylyltransferase from Pyrococcus furiosus (strain ATCC 43587 / DSM 3638 / JCM 8422 / Vc1).